A 439-amino-acid polypeptide reads, in one-letter code: 5-hydroxybenzimidazole synthase (439 aa).

Residues methionine 96, tyrosine 125, histidine 164, 187 to 189, 228 to 231, and glutamate 267 contribute to the substrate site; these read SKG and NGIR. Position 271 (histidine 271) interacts with Zn(2+). Tyrosine 294 contributes to the substrate binding site. Position 335 (histidine 335) interacts with Zn(2+). Residues cysteine 410, cysteine 413, and cysteine 417 each coordinate [4Fe-4S] cluster.

This sequence belongs to the ThiC family. 5-hydroxybenzimidazole synthase subfamily. As to quaternary structure, homodimer. [4Fe-4S] cluster serves as cofactor.

The enzyme catalyses 5-amino-1-(5-phospho-beta-D-ribosyl)imidazole + AH2 + S-adenosyl-L-methionine = 5-hydroxybenzimidazole + 5'-deoxyadenosine + formate + L-methionine + A + NH4(+) + phosphate + 2 H(+). Its function is as follows. Catalyzes the conversion of aminoimidazole ribotide (AIR) to 5-hydroxybenzimidazole (5-HBI) in a radical S-adenosyl-L-methionine (SAM)-dependent reaction. Is thus involved in the anaerobic biosynthesis of the benzimidazole lower axial ligand of the cobamide produced by D.autotrophicum. The sequence is that of 5-hydroxybenzimidazole synthase from Desulforapulum autotrophicum (strain ATCC 43914 / DSM 3382 / VKM B-1955 / HRM2) (Desulfobacterium autotrophicum).